Reading from the N-terminus, the 971-residue chain is Exportin-2 (971 aa).

The Importin N-terminal domain occupies 29–102 (AEKFLESVEG…KANIVNLMLS (74 aa)).

Belongs to the XPO2/CSE1 family. In terms of assembly, interacts with cftr.

The protein resides in the cytoplasm. Its subcellular location is the nucleus. Export receptor for importin alpha. Mediates importin-alpha re-export from the nucleus to the cytoplasm after import substrates have been released into the nucleoplasm. Negatively regulates fluid secretion and plays a role in fluid homeostasis by down-regulating cftr activity. This is Exportin-2 (cse1l) from Pagrus major (Red sea bream).